A 915-amino-acid polypeptide reads, in one-letter code: Protein MEI2-like 1 (915 aa).

The tract at residues methionine 1 to serine 90 is disordered. The segment covering histidine 16–serine 25 has biased composition (basic and acidic residues). The span at methionine 50–glutamine 65 shows a compositional bias: polar residues. Over residues serine 66–proline 77 the composition is skewed to low complexity. The residue at position 76 (serine 76) is a Phosphoserine. Over residues asparagine 78–glutamate 89 the composition is skewed to polar residues. 2 RRM domains span residues arginine 217–serine 290 and glycine 302–proline 375. 2 disordered regions span residues proline 690–asparagine 723 and leucine 854–asparagine 915. Over residues proline 705–asparagine 723 the composition is skewed to basic and acidic residues. Positions arginine 882–serine 898 are enriched in polar residues.

As to expression, expressed in roots, shoots, leaves, flowers and siliques.

In terms of biological role, probable RNA-binding transcriptional activator that plays a role in meiosis and vegetative growth. May be a downstream effector of TOR signaling pathway and recruited by RAPTOR1 for TOR substrate. The sequence is that of Protein MEI2-like 1 (ML1) from Arabidopsis thaliana (Mouse-ear cress).